A 355-amino-acid polypeptide reads, in one-letter code: Syntaxin-5 (355 aa).

The Cytoplasmic portion of the chain corresponds to 1–333; the sequence is MIPRKRYGSK…KYFQSVTSNR (333 aa). The IxM motif; signal for cargo packaging into COPII-coated vesicles signature appears at 245–247; the sequence is IDM. Residues 263 to 325 form the t-SNARE coiled-coil homology domain; it reads DSYIQSRADT…EAAHSEILKY (63 aa). Residues 287 to 318 are a coiled coil; that stretch reads FQQLAHMVKEQEETIQRIDENVLGAQLDVEAA. A helical; Anchor for type IV membrane protein membrane pass occupies residues 334–354; that stretch reads WLMVKIFLILIVFFIIFVVFL. A355 is a topological domain (vesicular).

The protein belongs to the syntaxin family. In terms of assembly, part of a ternary complex containing STX5A, NSFL1C and VCP. Part of a unique SNARE complex composed of the Golgi SNAREs GOSR1, GOSR2 and YKT6. This complex also includes VTI1A. Component of a SNARE complex consisting of STX5, YKT6, GOSR1 and BET1L. Interacts with BET1L. Interacts with BET1. Interacts with COG4. Interacts with GM130/GOLGA2. Interacts (via IxM motif) with SEC24C and SEC24D; mediates STX5 packaging into COPII-coated vesicles. Interacts with VLDLR; this interaction mediates VLDLR translocation from the endoplasmic reticulum to the plasma membrane. As to expression, expressed in the brain, heart, spleen, lung, liver, kidney and testis.

The protein resides in the endoplasmic reticulum-Golgi intermediate compartment membrane. Its subcellular location is the golgi apparatus membrane. Functionally, mediates endoplasmic reticulum to Golgi transport. Together with p115/USO1 and GM130/GOLGA2, involved in vesicle tethering and fusion at the cis-Golgi membrane to maintain the stacked and inter-connected structure of the Golgi apparatus. In terms of biological role, required for Golgi to endoplasmic reticulum retrogade transport, and for intra-Golgi transport. The chain is Syntaxin-5 (Stx5) from Rattus norvegicus (Rat).